The chain runs to 351 residues: MDLVQSTINQIGPLDDRAATAARRRQDMLTKPAGSLGRLEELSIRIAGITGRERPRLTNPAVIVMAADHGVARQGVSAFPAEVTPQMVLNFLRGGAAINVLARHVGARVIVVDIGVATDLPPHPDLVSRKLAYGTADFSQEPAMSHETARQAIAVGIACANQAIDSGVDLLATGEMGIANTTAASAVVAAITRRPASEVTGRGTGIDDSGLARKIAVIEQALHRHQPNPDDGLDVLAKVGGLEIGGLAGVILGAAARRVPVVIDGFIAGAAALIAATLAPAATAYMIAGHRSVERGHAAVFSHLDLQPLLDLNMRLGEGTGAVLAMSICQAACKILDEMATFAEAGVSEKV.

Residue Glu318 is the Proton acceptor of the active site.

It belongs to the CobT family.

The enzyme catalyses 5,6-dimethylbenzimidazole + nicotinate beta-D-ribonucleotide = alpha-ribazole 5'-phosphate + nicotinate + H(+). The protein operates within nucleoside biosynthesis; alpha-ribazole biosynthesis; alpha-ribazole from 5,6-dimethylbenzimidazole: step 1/2. Its function is as follows. Catalyzes the synthesis of alpha-ribazole-5'-phosphate from nicotinate mononucleotide (NAMN) and 5,6-dimethylbenzimidazole (DMB). In Chloroflexus aurantiacus (strain ATCC 29366 / DSM 635 / J-10-fl), this protein is Nicotinate-nucleotide--dimethylbenzimidazole phosphoribosyltransferase.